The following is a 261-amino-acid chain: MAGDSEQTLQNHQQPNGGEPFLIGVSGGTASGKSSVCAKIVQLLGQNEVDYHQKQVVILSQDSFYRVLTSEQKAKALKGQFNFDHPDAFDNELIFKTLKEITEGKTVQIPVYDFVSHSRKEETVTIYPADVVLFEGILAFYSQEVRDLFQMKLFVDTDADTRLSRRVLRDISERGRDLEQILSQYITFVKPAFEEFCLPTKKYADVIIPRGADNLVAINLIVQHIQDILNGGLSKRQTNGYLNGYTPSRKRQASESSSRPH.

Residues 1–16 (MAGDSEQTLQNHQQPN) show a composition bias toward polar residues. Positions 1–24 (MAGDSEQTLQNHQQPNGGEPFLIG) are disordered. Ala2 is subject to N-acetylalanine. 27 to 35 (GGTASGKSS) serves as a coordination point for ATP. Substrate is bound by residues Asp84, Tyr112, His117, Arg166, Arg176, and Gln184. An ATP-binding site is contributed by Asp213. Positions 240–261 (GYLNGYTPSRKRQASESSSRPH) are disordered. Position 254 is a phosphoserine (Ser254).

Belongs to the uridine kinase family. As to quaternary structure, homotetramer.

The catalysed reaction is uridine + ATP = UMP + ADP + H(+). It catalyses the reaction cytidine + ATP = CMP + ADP + H(+). Its pathway is pyrimidine metabolism; CTP biosynthesis via salvage pathway; CTP from cytidine: step 1/3. The protein operates within pyrimidine metabolism; UMP biosynthesis via salvage pathway; UMP from uridine: step 1/1. Functionally, phosphorylates uridine and cytidine to uridine monophosphate and cytidine monophosphate. Does not phosphorylate deoxyribonucleosides or purine ribonucleosides. Can use ATP or GTP as a phosphate donor. The protein is Uridine-cytidine kinase 2 (Uck2) of Mus musculus (Mouse).